Consider the following 455-residue polypeptide: MATRIASFIGISTVASLALANGINVPDTISRDVIILGAGSSGTYAAIRLKDEGKTVAVVERNDYLGGHGETYYTEDNTPLNFGVEGFFNTSVTRNYLERLQVPYGRRNPAPAHEDYVNLNTGQRTEYPPGQLQDREAFAKWVDAISQFGFLDDGVYRITEPVPEDLIIPFADFVKKYHLEDAVYALFSHTSGDVLEMITLYVIQYIGIPHAAALNEGYVRPIEGIAALYKSAGKELGSDVLLKTTPESVQRSKDGVEVTVRSADGTKTLLKGKQLLVTIPPLLENLHGFPLSDQESRIFSKWQYHQYWAALVNDTGLPDDVNIVNVDTERLYGVPEEPFIWRLDNHWAPGYHNIKLVGGSDFGEDEAKAYMYEKLDLLHEEGTYSTHKPEIVKFASHTPVTMFVSAEEIRGGFYRQLYELQGLNSTFWTGATWASDYSTLLWGYTDEVLDQMASS.

The N-terminal stretch at 1-20 is a signal peptide; it reads MATRIASFIGISTVASLALA.

This sequence belongs to the beta-cyclopiazonate dehydrogenase family. The cofactor is FAD.

The catalysed reaction is beta-cyclopiazonate + A = alpha-cyclopiazonate + AH2. In terms of biological role, beta-cyclopiazonate dehydrogenase involved in the synthesis of the fungal neurotoxin alpha-cyclopiazonic acid (CPA). CpaO carries out the dehydrogenation of beta-CPA to yield an unstable enimine product, which is captured by intramolecular cyclization to create the pentacyclic fused scaffold of alpha-cyclopiazonate. The chain is Beta-cyclopiazonate dehydrogenase from Aspergillus flavus (strain ATCC 200026 / FGSC A1120 / IAM 13836 / NRRL 3357 / JCM 12722 / SRRC 167).